The following is a 520-amino-acid chain: Keratin, type II cytoskeletal 4 (520 aa).

The segment at 1-136 (MIARQQCVRG…DPEIQKVRTE (136 aa)) is head. At Arg-13 the chain carries Omega-N-methylarginine. A coil 1A region spans residues 137-172 (EREQIKLLNNKFASFIDKVQFLEQQNKVLETKWNLL). Residues 137–450 (EREQIKLLNN…KLLEGEEYRM (314 aa)) form the IF rod domain. The interval 173 to 191 (QQQTTTTSSKNLEPLFETY) is linker 1. Residues 192–284 (LSVLRKQLDT…LYDAELSQMQ (93 aa)) form a coil 1B region. The tract at residues 285–307 (THVSDTSVVLSMDNNRNLDLDSI) is linker 12. A coil 2 region spans residues 308-447 (IAEVRAQYEE…TYRKLLEGEE (140 aa)). The tail stretch occupies residues 448–520 (YRMSGECQSA…ISTTTLNKRR (73 aa)). Residues 500 to 520 (GSVSGSSSSKIISTTTLNKRR) form a disordered region. Residues 503-514 (SGSSSSKIISTT) show a composition bias toward low complexity.

Belongs to the intermediate filament family. As to quaternary structure, heterotetramer of two type I and two type II keratins. Keratin-4 is generally associated with keratin-13. Detected in the suprabasal layer of the stratified epithelium of the esophagus, exocervix, vagina, mouth and lingual mucosa, and in cells and cell clusters in the mucosa and serous gland ducts of the esophageal submucosa (at protein level). Expressed widely in the exocervix and esophageal epithelium, with lowest levels detected in the basal cell layer.

In Homo sapiens (Human), this protein is Keratin, type II cytoskeletal 4 (KRT4).